A 98-amino-acid chain; its full sequence is NADH-ubiquinone oxidoreductase chain 4L (98 aa).

3 consecutive transmembrane segments (helical) span residues 1 to 21, 29 to 49, and 61 to 81; these read MSMV…GLLM, SLLC…ATIL, and IILL…LVTV.

This sequence belongs to the complex I subunit 4L family. As to quaternary structure, core subunit of respiratory chain NADH dehydrogenase (Complex I) which is composed of 45 different subunits.

It localises to the mitochondrion inner membrane. It catalyses the reaction a ubiquinone + NADH + 5 H(+)(in) = a ubiquinol + NAD(+) + 4 H(+)(out). Core subunit of the mitochondrial membrane respiratory chain NADH dehydrogenase (Complex I) which catalyzes electron transfer from NADH through the respiratory chain, using ubiquinone as an electron acceptor. Part of the enzyme membrane arm which is embedded in the lipid bilayer and involved in proton translocation. This is NADH-ubiquinone oxidoreductase chain 4L (MT-ND4L) from Pusa caspica (Caspian seal).